We begin with the raw amino-acid sequence, 281 residues long: 3-mercaptopyruvate sulfurtransferase (281 aa).

Rhodanese domains follow at residues 17-135 and 165-278; these read DDPE…LLEE and HENT…LPVE. R179 contacts substrate. Residue C238 is the Cysteine persulfide intermediate of the active site. The substrate specificity stretch occupies residues 238–244; it reads CGSGVTA.

In terms of assembly, monomer.

It is found in the cytoplasm. It carries out the reaction 2-oxo-3-sulfanylpropanoate + [thioredoxin]-dithiol = [thioredoxin]-disulfide + hydrogen sulfide + pyruvate + H(+). Catalyzes the transfer of sulfur from 3-mercaptopyruvate to a thiol-containing acceptor to form an intramolecular disulfide releasing hydrogen sulfide and pyruvate. May be involved in the enhancement of bacterial growth inhibition by serine. This Escherichia coli (strain K12) protein is 3-mercaptopyruvate sulfurtransferase (sseA).